Reading from the N-terminus, the 143-residue chain is Transcriptional regulator MraZ (143 aa).

2 SpoVT-AbrB domains span residues 5 to 47 (TYTP…PREE) and 76 to 119 (ADEQ…DAAA).

This sequence belongs to the MraZ family. In terms of assembly, forms oligomers.

It is found in the cytoplasm. The protein localises to the nucleoid. In Corynebacterium diphtheriae (strain ATCC 700971 / NCTC 13129 / Biotype gravis), this protein is Transcriptional regulator MraZ.